The sequence spans 363 residues: MSSDLKQTPLYQNYVDRGAKIVEFGGWAMPVQFSSIKEEHNAVRYEIGLFDVSHMGEIEVTGKDASQFVQYLLSNDTDNLTTSKALYTALCNEEGGIIDDLVIYKLADDNYLLVVNAANTEKDFNWILKHKEKFDVEVQNVSNQYGQLAIQGPKARDLINQLVDEDVTEMKMFEFKQGVKLFGANVILSQSGYTGEDGFEIYCNIDDTEKIWDGLLEYNVMPCGLGARDTLRLEAGLPLHGQDLTESITPYEGGIAFASKPLIDADFIGKSVLKDQKENGAPRRTVGLELLEKGIARTGYEVMDLDGNIIGEVTSGTQSPSSGKSIALAMIKRDEFEMGRELLVQVRKRQLKAKIVKKNQIDK.

The protein belongs to the GcvT family. The glycine cleavage system is composed of four proteins: P, T, L and H.

The catalysed reaction is N(6)-[(R)-S(8)-aminomethyldihydrolipoyl]-L-lysyl-[protein] + (6S)-5,6,7,8-tetrahydrofolate = N(6)-[(R)-dihydrolipoyl]-L-lysyl-[protein] + (6R)-5,10-methylene-5,6,7,8-tetrahydrofolate + NH4(+). In terms of biological role, the glycine cleavage system catalyzes the degradation of glycine. This chain is Aminomethyltransferase, found in Staphylococcus aureus (strain N315).